Here is a 594-residue protein sequence, read N- to C-terminus: DNA mismatch repair protein MutL (594 aa).

This sequence belongs to the DNA mismatch repair MutL/HexB family.

Its function is as follows. This protein is involved in the repair of mismatches in DNA. It is required for dam-dependent methyl-directed DNA mismatch repair. May act as a 'molecular matchmaker', a protein that promotes the formation of a stable complex between two or more DNA-binding proteins in an ATP-dependent manner without itself being part of a final effector complex. The protein is DNA mismatch repair protein MutL of Tolumonas auensis (strain DSM 9187 / NBRC 110442 / TA 4).